Consider the following 391-residue polypeptide: Zinc finger protein 414 (391 aa).

A disordered region spans residues 1–110 (MDEEPSGPSL…RRPPPGKQIP (110 aa)). A compositionally biased stretch (polar residues) spans 84–93 (GPTSTVSGTS). 3 C2H2-type zinc fingers span residues 109–133 (IPCSSPGCCLSFPSVRDLAQHLRTH), 145–169 (FRCSALSCTETFPNMQELVAHGKLH), and 176–201 (FKCENCLLRIRTHRSLFKHLHVCAEH). Disordered stretches follow at residues 201 to 243 (HAQS…LEPF), 274 to 312 (LAAAPGPPASSAAVWKKSQGAGGSPRRPQGGSDAPSGHA), and 344 to 391 (HLED…FSPL). The span at 214-226 (LDRESPASERPPE) shows a compositional bias: basic and acidic residues. Over residues 227-236 (SDPAPAPGLP) the composition is skewed to pro residues. Low complexity predominate over residues 274–286 (LAAAPGPPASSAA). The segment at 326-348 (YSCMQCAFSTASRPAMTLHLEDH) adopts a C2H2-type 4 zinc-finger fold. Positions 353–372 (PAAPAPGQPRPDAPADPAPL) are enriched in pro residues.

This sequence belongs to the krueppel C2H2-type zinc-finger protein family.

It is found in the nucleus. May be involved in transcriptional regulation. This Bos taurus (Bovine) protein is Zinc finger protein 414 (ZNF414).